Consider the following 610-residue polypeptide: Menin (610 aa).

Positions 214–390 (GVAERSWLYL…SLLEAGEERP (177 aa)) are interaction with FANCD2. Positions 460–552 (REAEAAEAEE…SPPPEGPVLT (93 aa)) are disordered. Residues 484–500 (RRESKPEEPPPPKKPAL) are compositionally biased toward basic and acidic residues. Phosphoserine is present on residues Ser487 and Ser543. The residue at position 594 (Thr594) is a Phosphothreonine.

As to quaternary structure, component of the MLL-HCF complex, at least composed of KMT2A/MLL1, MEN1, ASH2L, RBBP5, DPY30, WDR5, HCFC1 and HCFC2. Component of the menin-associated histone methyltransferase complex, at least composed of KMT2B/MLL4, MEN1, ASH2L, RBBP5, DPY30 and WDR5. Interacts with POLR2B. Interacts with POLR2A phosphorylated at 'Ser-5', but not with the unphosphorylated, nor 'Ser-2' phosphorylated POLR2A forms. Interacts with FANCD2 and DBF4. Interacts with JUND (via MBM motif); inhibits the interaction of JUND with MAPK10 and the phosphorylation of JUND by MAP kinases MAPK8 and MAPK10. Interacts with SMAD3, but not with SMAD2, nor SMAD4. Directly interacts with NFKB1, NFKB2 and RELA. Interacts with KMT2A (via MBM motif). The KMT2A-MEN1 complex interacts with PSIP1 with a greater affinity as MEN1 enhances interaction of KMT2A with PSIP1. Interacts with the fusion protein KMT2A-MLLT3. In terms of tissue distribution, ubiquitous.

The protein resides in the nucleus. Essential component of a MLL/SET1 histone methyltransferase (HMT) complex, a complex that specifically methylates 'Lys-4' of histone H3 (H3K4). Functions as a transcriptional regulator. Binds to the TERT promoter and represses telomerase expression. Plays a role in TGFB1-mediated inhibition of cell-proliferation, possibly regulating SMAD3 transcriptional activity. Represses JUND-mediated transcriptional activation on AP1 sites, as well as that mediated by NFKB subunit RELA. Positively regulates HOXC8 and HOXC6 gene expression. May be involved in normal hematopoiesis through the activation of HOXA9 expression. May be involved in DNA repair. The chain is Menin (MEN1) from Homo sapiens (Human).